The sequence spans 60 residues: Small ribosomal subunit protein eS31 (60 aa).

4 residues coordinate Zn(2+): Cys-27, Cys-30, Cys-45, and Cys-48. A C4-type zinc finger spans residues Cys-27–Cys-48.

It belongs to the eukaryotic ribosomal protein eS31 family. In terms of assembly, part of the 30S ribosomal subunit. Zn(2+) serves as cofactor.

The polypeptide is Small ribosomal subunit protein eS31 (Methanocaldococcus jannaschii (strain ATCC 43067 / DSM 2661 / JAL-1 / JCM 10045 / NBRC 100440) (Methanococcus jannaschii)).